A 602-amino-acid chain; its full sequence is Elongation factor 4 (602 aa).

The 183-residue stretch at 6 to 188 (DRIRNFCIIA…RIVRDVPPPG (183 aa)) folds into the tr-type G domain. GTP is bound by residues 18-23 (DHGKST) and 135-138 (NKID).

It belongs to the TRAFAC class translation factor GTPase superfamily. Classic translation factor GTPase family. LepA subfamily.

Its subcellular location is the cell membrane. It catalyses the reaction GTP + H2O = GDP + phosphate + H(+). In terms of biological role, required for accurate and efficient protein synthesis under certain stress conditions. May act as a fidelity factor of the translation reaction, by catalyzing a one-codon backward translocation of tRNAs on improperly translocated ribosomes. Back-translocation proceeds from a post-translocation (POST) complex to a pre-translocation (PRE) complex, thus giving elongation factor G a second chance to translocate the tRNAs correctly. Binds to ribosomes in a GTP-dependent manner. The protein is Elongation factor 4 of Desulforudis audaxviator (strain MP104C).